The following is a 272-amino-acid chain: ATP synthase subunit delta (272 aa).

The protein belongs to the ATPase delta chain family. As to quaternary structure, F-type ATPases have 2 components, F(1) - the catalytic core - and F(0) - the membrane proton channel. F(1) has five subunits: alpha(3), beta(3), gamma(1), delta(1), epsilon(1). F(0) has three main subunits: a(1), b(2) and c(10-14). The alpha and beta chains form an alternating ring which encloses part of the gamma chain. F(1) is attached to F(0) by a central stalk formed by the gamma and epsilon chains, while a peripheral stalk is formed by the delta and b chains.

It localises to the cell membrane. In terms of biological role, f(1)F(0) ATP synthase produces ATP from ADP in the presence of a proton or sodium gradient. F-type ATPases consist of two structural domains, F(1) containing the extramembraneous catalytic core and F(0) containing the membrane proton channel, linked together by a central stalk and a peripheral stalk. During catalysis, ATP synthesis in the catalytic domain of F(1) is coupled via a rotary mechanism of the central stalk subunits to proton translocation. This protein is part of the stalk that links CF(0) to CF(1). It either transmits conformational changes from CF(0) to CF(1) or is implicated in proton conduction. This is ATP synthase subunit delta from Corynebacterium jeikeium (strain K411).